A 281-amino-acid polypeptide reads, in one-letter code: Transcription factor HES-1 (281 aa).

Residues 1-44 (MPADIMEKNSSSPVAATPASVNTTPDKPKTASEHRKSSKPIMEK) form a disordered region. Positions 10 to 21 (SSSPVAATPASV) are enriched in low complexity. Positions 26–35 (DKPKTASEHR) are enriched in basic and acidic residues. One can recognise a bHLH domain in the interval 34 to 91 (HRKSSKPIMEKRRRARINESLSQLKTLILDALKKDSSRHSKLEKADILEMTVKHLRNL). An Orange domain is found at 110-143 (YRAGFSECMNEVTRFLSTCEGVNTEVRTRLLGHL). Disordered regions lie at residues 158–206 (QAHP…PCKL) and 255–281 (TSVG…PWRN). Composition is skewed to pro residues over residues 164–174 (QAPPPPPPSGP) and 182–201 (FAPP…PPGS). The segment covering 255 to 272 (TSVGPNAVSPSSGSSLTA) has biased composition (polar residues). The short motif at 276–279 (WRPW) is the WRPW motif element.

In terms of assembly, interacts with SIRT1. Interacts weakly with TLE2. Interacts with HES6. Transcription repression requires formation of a complex with a corepressor protein of the Groucho/TLE family. Interacts (via WPRW motif) with TLE1. Interacts with an FA complex, composed of FANCA, FANCF, FANCG and FANCL, but not of FANCC, nor FANCE. As to expression, present in all tissues examined but highest in epithelial cells and in mesoderm-derived tissues such as embryonal muscle cells.

The protein localises to the nucleus. Functionally, transcriptional repressor of genes that require a bHLH protein for their transcription. May act as a negative regulator of myogenesis by inhibiting the functions of MYOD1 and ASH1. Binds DNA on N-box motifs: 5'-CACNAG-3' with high affinity and on E-box motifs: 5'-CANNTG-3' with low affinity. May play a role in a functional FA core complex response to DNA cross-link damage, being required for the stability and nuclear localization of FA core complex proteins, as well as for FANCD2 monoubiquitination in response to DNA damage. This chain is Transcription factor HES-1 (Hes1), found in Rattus norvegicus (Rat).